We begin with the raw amino-acid sequence, 2351 residues long: Coagulation factor VIII (2351 aa).

A signal peptide spans Met1 to Ser19. Plastocyanin-like domains are found at residues Ala20 to Cys198 and Glu206 to Cys348. The 329-residue stretch at Ala20–Cys348 folds into the F5/8 type A 1 domain. A glycan (N-linked (GlcNAc...) asparagine) is linked at Asn60. Residues Cys172 and Cys198 are joined by a disulfide bond. N-linked (GlcNAc...) asparagine glycosylation occurs at Asn258. Cys267 and Cys348 are oxidised to a cystine. Sulfotyrosine is present on Tyr365. Plastocyanin-like domains are found at residues Lys399–Cys573 and Asn583–Cys730. The F5/8 type A 2 domain maps to Lys399–Cys730. Cysteines 547 and 573 form a disulfide. An N-linked (GlcNAc...) asparagine glycan is attached at Asn601. A disulfide bridge connects residues Cys649 and Cys730. Sulfotyrosine occurs at positions 737, 738, and 742. Residues Ser760–Arg1667 are b. N-linked (GlcNAc...) asparagine glycans are attached at residues Asn776, Asn803, Asn847, and Asn919. Disordered stretches follow at residues Ser906–Met928 and Phe941–Asn961. Residues Asn962, Asn982, Asn1020, Asn1024, Asn1074, Asn1085, Asn1204, Asn1274, Asn1278, Asn1301, Asn1319, Asn1431, and Asn1461 are each glycosylated (N-linked (GlcNAc...) asparagine). A sulfotyrosine mark is found at Tyr1683 and Tyr1699. Plastocyanin-like domains are found at residues Lys1713–Cys1877 and Gly1887–Cys2040. The F5/8 type A 3 domain occupies Lys1713–Cys2040. Asn1829 is a glycosylation site (N-linked (GlcNAc...) asparagine). Intrachain disulfides connect Cys1851–Cys1877, Cys1918–Cys1922, Cys2040–Cys2188, and Cys2193–Cys2345. 2 consecutive F5/8 type C domains span residues Cys2040–Cys2188 and Cys2193–Cys2345. An N-linked (GlcNAc...) asparagine glycan is attached at Asn2137.

The protein belongs to the multicopper oxidase family. As to quaternary structure, interacts with VWF/vWF. vWF binding is essential for the stabilization of F8 in circulation. In terms of processing, sulfation on Tyr-1699 is essential for binding vWF. Post-translationally, proteolytically cleaved by cathepsin CTSG to produce a partially activated form.

Its subcellular location is the secreted. It localises to the extracellular space. Functionally, factor VIII, along with calcium and phospholipid, acts as a cofactor for F9/factor IXa when it converts F10/factor X to the activated form, factor Xa. This Homo sapiens (Human) protein is Coagulation factor VIII (F8).